The following is a 133-amino-acid chain: Small ribosomal subunit protein uS8 (133 aa).

The protein belongs to the universal ribosomal protein uS8 family. In terms of assembly, part of the 30S ribosomal subunit. Contacts proteins S5 and S12.

Its function is as follows. One of the primary rRNA binding proteins, it binds directly to 16S rRNA central domain where it helps coordinate assembly of the platform of the 30S subunit. This chain is Small ribosomal subunit protein uS8, found in Microcystis aeruginosa (strain NIES-843 / IAM M-2473).